Consider the following 1076-residue polypeptide: DNA-directed RNA polymerase subunit beta (1076 aa).

The protein belongs to the RNA polymerase beta chain family. In plastids the minimal PEP RNA polymerase catalytic core is composed of four subunits: alpha, beta, beta', and beta''. When a (nuclear-encoded) sigma factor is associated with the core the holoenzyme is formed, which can initiate transcription.

The protein resides in the plastid. The protein localises to the chloroplast. The enzyme catalyses RNA(n) + a ribonucleoside 5'-triphosphate = RNA(n+1) + diphosphate. Functionally, DNA-dependent RNA polymerase catalyzes the transcription of DNA into RNA using the four ribonucleoside triphosphates as substrates. The polypeptide is DNA-directed RNA polymerase subunit beta (Agrostis stolonifera (Creeping bentgrass)).